The primary structure comprises 97 residues: ATP-dependent Clp protease adapter protein ClpS (97 aa).

It belongs to the ClpS family. Binds to the N-terminal domain of the chaperone ClpA.

Functionally, involved in the modulation of the specificity of the ClpAP-mediated ATP-dependent protein degradation. The sequence is that of ATP-dependent Clp protease adapter protein ClpS from Nostoc sp. (strain PCC 7120 / SAG 25.82 / UTEX 2576).